The chain runs to 375 residues: Putative F-box/kelch-repeat protein At3g24610 (375 aa).

The interval Met1 to Phe27 is disordered. The region spanning Ser25 to Arg71 is the F-box domain. One copy of the Kelch repeat lies at Lys138–Ser183.

The chain is Putative F-box/kelch-repeat protein At3g24610 from Arabidopsis thaliana (Mouse-ear cress).